Consider the following 212-residue polypeptide: Large ribosomal subunit protein bL25 (212 aa).

The interval 190-212 (IAEAGDALAEPEVISKGSGEADE) is disordered.

The protein belongs to the bacterial ribosomal protein bL25 family. CTC subfamily. As to quaternary structure, part of the 50S ribosomal subunit; part of the 5S rRNA/L5/L18/L25 subcomplex. Contacts the 5S rRNA. Binds to the 5S rRNA independently of L5 and L18.

Its function is as follows. This is one of the proteins that binds to the 5S RNA in the ribosome where it forms part of the central protuberance. This Rhodopirellula baltica (strain DSM 10527 / NCIMB 13988 / SH1) protein is Large ribosomal subunit protein bL25.